The sequence spans 85 residues: Putative membrane protein insertion efficiency factor (85 aa).

Belongs to the UPF0161 family.

It is found in the cell membrane. Its function is as follows. Could be involved in insertion of integral membrane proteins into the membrane. The chain is Putative membrane protein insertion efficiency factor from Leifsonia xyli subsp. xyli (strain CTCB07).